The sequence spans 1047 residues: Probable sucrose-phosphate synthase 2 (1047 aa).

Residues 101-123 (EGKNAKREAKREREREKARREVT) are compositionally biased toward basic and acidic residues. The segment at 101-153 (EGKNAKREAKREREREKARREVTAEMSEDFSEGEKADLPGEIPTPSDNNTKGR) is disordered. 3 positions are modified to phosphoserine: Ser-127, Ser-131, and Ser-159. Residues 712–731 (KSGSNNGVDTNLDAEDRAAE) are disordered.

It belongs to the glycosyltransferase 1 family. As to quaternary structure, homodimer or homotetramer. In terms of tissue distribution, expressed in roots, cauline leaves, flower buds, flowers and anthers. Highly expressed in maturing nectaries.

The enzyme catalyses beta-D-fructose 6-phosphate + UDP-alpha-D-glucose = sucrose 6(F)-phosphate + UDP + H(+). Its pathway is glycan biosynthesis; sucrose biosynthesis; sucrose from D-fructose 6-phosphate and UDP-alpha-D-glucose: step 1/2. With respect to regulation, activity is regulated by phosphorylation and moderated by concentration of metabolites and light. Its function is as follows. Plays a role in photosynthetic sucrose synthesis by catalyzing the rate-limiting step of sucrose biosynthesis from UDP-glucose and fructose- 6-phosphate. Involved in the regulation of carbon partitioning in the leaves of plants. May regulate the synthesis of sucrose and therefore play a major role as a limiting factor in the export of photoassimilates out of the leaf. Plays a role for sucrose availability that is essential for plant growth and fiber elongation. Required for nectar secretion. This Arabidopsis thaliana (Mouse-ear cress) protein is Probable sucrose-phosphate synthase 2 (SPS2).